The primary structure comprises 466 residues: MTTSPILQLLLRLSLCGLLLQRAETGSKGQTAGELYQRWERYRRECQETLAAAEPPSGLACNGSFDMYVCWDYAAPNATARASCPWYLPWHHHVAAGFVLRQCGSDGQWGLWRDHTQCENPEKNEAFLDQRLILERLQVMYTVGYSLSLATLLLALLILSLFRRLHCTRNYIHINLFTSFMLRAAAILSRDRLLPRPGPYLGDQALALWNQALAACRTAQIVTQYCVGANYTWLLVEGVYLHSLLVLVGGSEEGHFRYYLLLGWGAPALFVIPWVIVRYLYENTQCWERNEVKAIWWIIRTPILMTILINFLIFIRILGILLSKLRTRQMRCRDYRLRLARSTLTLVPLLGVHEVVFAPVTEEQARGALRFAKLGFEIFLSSFQGFLVSVLYCFINKEVQSEIRRGWHHCRLRRSLGEEQRQLPERAFRALPSGSGPGEVPTSRGLSSGTLPGPGNEASRELESYC.

An N-terminal signal peptide occupies residues 1-21; sequence MTTSPILQLLLRLSLCGLLLQ. Over 22–138 the chain is Extracellular; sequence RAETGSKGQT…DQRLILERLQ (117 aa). 3 disulfide bridges follow: Cys-46–Cys-70, Cys-61–Cys-103, and Cys-84–Cys-118. Residues Asn-62 and Asn-77 are each glycosylated (N-linked (GlcNAc...) asparagine). A helical membrane pass occupies residues 139–161; the sequence is VMYTVGYSLSLATLLLALLILSL. At 162 to 169 the chain is on the cytoplasmic side; that stretch reads FRRLHCTR. Residues 170 to 189 traverse the membrane as a helical segment; the sequence is NYIHINLFTSFMLRAAAILS. The Extracellular segment spans residues 190–217; the sequence is RDRLLPRPGPYLGDQALALWNQALAACR. The chain crosses the membrane as a helical span at residues 218–242; sequence TAQIVTQYCVGANYTWLLVEGVYLH. Topologically, residues 243-254 are cytoplasmic; the sequence is SLLVLVGGSEEG. A helical membrane pass occupies residues 255 to 278; it reads HFRYYLLLGWGAPALFVIPWVIVR. Residues 279-293 lie on the Extracellular side of the membrane; it reads YLYENTQCWERNEVK. A helical membrane pass occupies residues 294–319; sequence AIWWIIRTPILMTILINFLIFIRILG. The Cytoplasmic portion of the chain corresponds to 320 to 341; the sequence is ILLSKLRTRQMRCRDYRLRLAR. The helical transmembrane segment at 342–362 threads the bilayer; that stretch reads STLTLVPLLGVHEVVFAPVTE. Topologically, residues 363-377 are extracellular; sequence EQARGALRFAKLGFE. A helical transmembrane segment spans residues 378-398; sequence IFLSSFQGFLVSVLYCFINKE. Residues 399-466 are Cytoplasmic-facing; sequence VQSEIRRGWH…EASRELESYC (68 aa). Residues 427-466 are disordered; sequence AFRALPSGSGPGEVPTSRGLSSGTLPGPGNEASRELESYC.

The protein belongs to the G-protein coupled receptor 2 family. In terms of assembly, may form homodimers and heterodimers with GLP1R. N-glycosylation is required for cell surface expression and lengthens receptor half-life by preventing degradation in the ER.

Its subcellular location is the cell membrane. In terms of biological role, this is a receptor for GIP. The activity of this receptor is mediated by G proteins which activate adenylyl cyclase. This chain is Gastric inhibitory polypeptide receptor (GIPR), found in Homo sapiens (Human).